A 555-amino-acid chain; its full sequence is Splicing factor U2af large subunit A (555 aa).

The interval M1 to T165 is disordered. Composition is skewed to basic and acidic residues over residues I23–R81 and R90–D127. Residues S143–R155 are compositionally biased toward basic residues. RRM domains follow at residues R221–D304, D341–Q419, and E460–N546.

It belongs to the splicing factor SR family. As to expression, expressed in stems, leaves and apical buds.

Its subcellular location is the nucleus. Functionally, necessary for the splicing of pre-mRNA. Binds to the U -enriched regions of plant introns. The protein is Splicing factor U2af large subunit A (U2AF65A) of Nicotiana plumbaginifolia (Leadwort-leaved tobacco).